The chain runs to 262 residues: Putative non-heme bromoperoxidase BpoC (262 aa).

Substrate contacts are provided by residues R21, 87–88, and R120; that span reads SM. S87 is a catalytic residue. Residues D211 and H239 contribute to the active site. Substrate is bound at residue H239.

It belongs to the AB hydrolase superfamily. In terms of assembly, homodimer.

This is Putative non-heme bromoperoxidase BpoC (bpoC) from Mycobacterium tuberculosis (strain CDC 1551 / Oshkosh).